The sequence spans 415 residues: Beta-1,4-glucuronyltransferase 1 (415 aa).

Residues 1 to 8 (MQMSYAIR) lie on the Cytoplasmic side of the membrane. A helical; Signal-anchor for type II membrane protein membrane pass occupies residues 9 to 36 (CAFYQLLLAALMLVAMLQLLYLSLLSGL). Topologically, residues 37 to 415 (HGQEEQDQYF…AKYPDSPRHC (379 aa)) are lumenal. An N-linked (GlcNAc...) asparagine glycan is attached at Asn204. Mn(2+)-binding residues include Asp227 and Asp229. Asn300 carries N-linked (GlcNAc...) asparagine glycosylation.

The protein belongs to the glycosyltransferase 49 family. Interacts with LARGE1 and LARGE2. The cofactor is Mn(2+).

It is found in the golgi apparatus membrane. It catalyses the reaction 3-O-[beta-D-Xyl-(1-&gt;4)-Rib-ol-P-Rib-ol-P-3-beta-D-GalNAc-(1-&gt;3)-beta-D-GlcNAc-(1-&gt;4)-(O-6-P-alpha-D-Man)]-Thr-[protein] + UDP-alpha-D-glucuronate = 3-O-[beta-D-GlcA-(1-&gt;3)-beta-D-Xyl-(1-&gt;4)-Rib-ol-P-Rib-ol-P-3-beta-D-GalNAc-(1-&gt;3)-beta-D-GlcNAc-(1-&gt;4)-(O-6-P-alpha-D-Man)]-Thr-[protein] + UDP + H(+). It participates in protein modification; protein glycosylation. Functionally, beta-1,4-glucuronyltransferase involved in O-mannosylation of alpha-dystroglycan (DAG1). Transfers a glucuronic acid (GlcA) residue onto a xylose (Xyl) acceptor to produce the glucuronyl-beta-1,4-xylose-beta disaccharide primer, which is further elongated by LARGE1, during synthesis of phosphorylated O-mannosyl glycan. Phosphorylated O-mannosyl glycan is a carbohydrate structure present in alpha-dystroglycan (DAG1), which is required for binding laminin G-like domain-containing extracellular proteins with high affinity. Required for axon guidance; via its function in O-mannosylation of alpha-dystroglycan (DAG1). This chain is Beta-1,4-glucuronyltransferase 1, found in Bos taurus (Bovine).